A 617-amino-acid chain; its full sequence is DNA mismatch repair protein MutL (617 aa).

The protein belongs to the DNA mismatch repair MutL/HexB family.

In terms of biological role, this protein is involved in the repair of mismatches in DNA. It is required for dam-dependent methyl-directed DNA mismatch repair. May act as a 'molecular matchmaker', a protein that promotes the formation of a stable complex between two or more DNA-binding proteins in an ATP-dependent manner without itself being part of a final effector complex. The polypeptide is DNA mismatch repair protein MutL (Christiangramia forsetii (strain DSM 17595 / CGMCC 1.15422 / KT0803) (Gramella forsetii)).